The following is a 401-amino-acid chain: Phosphoglycerate kinase (401 aa).

Substrate contacts are provided by residues 20-22 (DFN), Arg35, 58-61 (HLGR), Arg117, and Arg154. Residues Lys204, Gly298, Glu329, and 358–361 (GGDS) contribute to the ATP site.

This sequence belongs to the phosphoglycerate kinase family. Monomer.

It localises to the cytoplasm. The catalysed reaction is (2R)-3-phosphoglycerate + ATP = (2R)-3-phospho-glyceroyl phosphate + ADP. The protein operates within carbohydrate degradation; glycolysis; pyruvate from D-glyceraldehyde 3-phosphate: step 2/5. The protein is Phosphoglycerate kinase of Bifidobacterium longum (strain NCC 2705).